The following is an 852-amino-acid chain: DNA mismatch repair protein MutS (852 aa).

602–609 is a binding site for ATP; that stretch reads GPNMSGKS.

It belongs to the DNA mismatch repair MutS family.

Its function is as follows. This protein is involved in the repair of mismatches in DNA. It is possible that it carries out the mismatch recognition step. This protein has a weak ATPase activity. This is DNA mismatch repair protein MutS from Streptococcus thermophilus (strain ATCC BAA-250 / LMG 18311).